The following is a 331-amino-acid chain: UBX domain-containing protein 2B (331 aa).

Basic and acidic residues-rich tracts occupy residues 1–16 and 37–48; these read MAEG…ERGS and DEMKCKSSKPDR. The tract at residues 1–70 is disordered; that stretch reads MAEGGRAEPE…PHRLYSGDHK (70 aa). An N-acetylalanine modification is found at Ala2. Ser56 carries the phosphoserine modification. Thr59 carries the phosphothreonine modification. The residue at position 66 (Ser66) is a Phosphoserine. The 66-residue stretch at 141-206 folds into the SEP domain; the sequence is DVQVLLKLWR…MEDHQDQEYI (66 aa). 3 positions are modified to phosphoserine: Ser231, Ser234, and Ser235. One can recognise a UBX domain in the interval 252–329; the sequence is DSMPTTKIQI…DILNTVILQQ (78 aa).

This sequence belongs to the NSFL1C family. Interacts with VCP. Does not bind ubiquitin.

The protein resides in the nucleus. Its subcellular location is the cytoplasm. The protein localises to the cytosol. It is found in the endoplasmic reticulum. It localises to the golgi apparatus. The protein resides in the cytoskeleton. Its subcellular location is the microtubule organizing center. The protein localises to the centrosome. Its function is as follows. Adapter protein required for Golgi and endoplasmic reticulum biogenesis. Involved in Golgi and endoplasmic reticulum maintenance during interphase and in their reassembly at the end of mitosis. The complex formed with VCP has membrane fusion activity; membrane fusion activity requires USO1-GOLGA2 tethering and BET1L. VCPIP1 is also required, but not its deubiquitinating activity. Together with NSFL1C/p47, regulates the centrosomal levels of kinase AURKA/Aurora A during mitotic progression by promoting AURKA removal from centrosomes in prophase. Also, regulates spindle orientation during mitosis. The chain is UBX domain-containing protein 2B (Ubxn2b) from Mus musculus (Mouse).